Reading from the N-terminus, the 654-residue chain is Peptide-N(4)-(N-acetyl-beta-glucosaminyl)asparagine amidase (654 aa).

A2 is subject to N-acetylalanine. The region spanning 30–91 (EASKLLLTYA…EGETHLIFPK (62 aa)) is the PUB domain. A disordered region spans residues 112-163 (RLDGSNKSHKVKSSQQPAASTQLPTTPSSNPSGLNQHTRNRQGQSSDPPSAS). Polar residues predominate over residues 124 to 163 (SSQQPAASTQLPTTPSSNPSGLNQHTRNRQGQSSDPPSAS). T137 carries the post-translational modification Phosphothreonine. 4 residues coordinate Zn(2+): C250, C253, C283, and C286. The active-site Nucleophile is C309. Residues H336 and D353 contribute to the active site. The region spanning 454–654 (ELGGRISGSV…LEIIIKFSDL (201 aa)) is the PAW domain.

Belongs to the transglutaminase-like superfamily. PNGase family. Component of a complex required to couple retrotranslocation, ubiquitination and deglycosylation composed of NGLY1, SAKS1, AMFR, VCP and RAD23B. Interacts with the proteasome components RAD23B and PSMC1. Interacts with directly with VCP. Interacts with DERL1, bringing it close to the endoplasmic reticulum membrane. Interacts with SAKS1. Zn(2+) serves as cofactor.

It localises to the cytoplasm. The enzyme catalyses Hydrolysis of an N(4)-(acetyl-beta-D-glucosaminyl)asparagine residue in which the glucosamine residue may be further glycosylated, to yield a (substituted) N-acetyl-beta-D-glucosaminylamine and a peptide containing an aspartate residue.. Its activity is regulated as follows. Inhibited by Z-VAD-fmk, a well-known caspase inhibitor, which inhibits enzyme activity through covalent binding of the carbohydrate to the single Cys-306 residue. Specifically deglycosylates the denatured form of N-linked glycoproteins in the cytoplasm and assists their proteasome-mediated degradation. Cleaves the beta-aspartyl-glucosamine (GlcNAc) of the glycan and the amide side chain of Asn, converting Asn to Asp. Prefers proteins containing high-mannose over those bearing complex type oligosaccharides. Can recognize misfolded proteins in the endoplasmic reticulum that are exported to the cytosol to be destroyed and deglycosylate them, while it has no activity toward native proteins. Deglycosylation is a prerequisite for subsequent proteasome-mediated degradation of some, but not all, misfolded glycoproteins. In Homo sapiens (Human), this protein is Peptide-N(4)-(N-acetyl-beta-glucosaminyl)asparagine amidase (NGLY1).